The following is a 1028-amino-acid chain: Golgin subfamily A member 2 (1028 aa).

The disordered stretch occupies residues 1 to 112 (MADQNRQIKL…NRPLSSTESL (112 aa)). Over residues 40-60 (KGDQTDAPADRRSPENERVDV) the composition is skewed to basic and acidic residues. Residues 74–87 (NPASAINTDNSAPQ) show a composition bias toward polar residues. Coiled-coil stretches lie at residues 162 to 200 (NTQLTSKLETLTKQSQELSDQLQKERKEFEQKFTKEQGA), 233 to 388 (ARQK…YAVQ), 414 to 690 (RDST…LLNG), 738 to 769 (LSRVEAERDEMSRRLEEERRIHQDTRQQLTAL), and 799 to 840 (HEAL…LSGE). The disordered stretch occupies residues 259–280 (RTLSSVSTQQKQHERHNKELEK). The tract at residues 756 to 791 (RRIHQDTRQQLTALSHDHHHHHHHEPHSTCAETDGS) is disordered. Positions 944-981 (AMDVSSSPQSSTAEIQSQSSERPAADPISSPSLRPQED) are disordered. The span at 945 to 964 (MDVSSSPQSSTAEIQSQSSE) shows a compositional bias: polar residues.

This sequence belongs to the GOLGA2 family.

It localises to the golgi apparatus. It is found in the cis-Golgi network membrane. The protein resides in the endoplasmic reticulum-Golgi intermediate compartment membrane. The protein localises to the cytoplasm. Its subcellular location is the cytoskeleton. It localises to the spindle pole. In terms of biological role, peripheral membrane component of the cis-Golgi stack that acts as a membrane skeleton that maintains the structure of the Golgi apparatus, and as a vesicle thether that facilitates vesicle fusion to the Golgi membrane. Required for normal protein transport from the endoplasmic reticulum to the Golgi apparatus and the cell membrane. Plays a central role in mitotic Golgi disassembly. Also plays a key role in spindle pole assembly and centrosome organization. It probably promotes mitotic spindle pole assembly by activating assembly factors to nucleate microtubules around the Golgi and capture them to couple mitotic membranes to the spindle. Also required for the Golgi ribbon formation and glycosylation of membrane and secretory proteins. This chain is Golgin subfamily A member 2, found in Danio rerio (Zebrafish).